A 268-amino-acid polypeptide reads, in one-letter code: GTP cyclohydrolase 1 type 2 homolog (268 aa).

Residues histidine 66, histidine 67, aspartate 105, histidine 227, and glutamate 231 each coordinate a divalent metal cation.

This sequence belongs to the GTP cyclohydrolase I type 2/NIF3 family. As to quaternary structure, homohexamer.

The protein is GTP cyclohydrolase 1 type 2 homolog of Clostridium acetobutylicum (strain ATCC 824 / DSM 792 / JCM 1419 / IAM 19013 / LMG 5710 / NBRC 13948 / NRRL B-527 / VKM B-1787 / 2291 / W).